The primary structure comprises 54 residues: MKLYISPPQTLEYLKFEYRHFPFKACEYLKFQNLHQYIRWYYQLFPLMVQLVAL.

This is an uncharacterized protein from Dictyostelium discoideum (Social amoeba).